Here is a 226-residue protein sequence, read N- to C-terminus: Ribonuclease 3 (226 aa).

Positions 6–128 (INRLQRKLGY…LIGGIFLDSD (123 aa)) constitute an RNase III domain. Mg(2+) is bound at residue Glu41. Residue Asp45 is part of the active site. The Mg(2+) site is built by Asp114 and Glu117. Glu117 is an active-site residue. Residues 155 to 225 (DPKTRLQEFL…AEQALKQLEL (71 aa)) enclose the DRBM domain.

This sequence belongs to the ribonuclease III family. In terms of assembly, homodimer. It depends on Mg(2+) as a cofactor.

The protein localises to the cytoplasm. It catalyses the reaction Endonucleolytic cleavage to 5'-phosphomonoester.. In terms of biological role, digests double-stranded RNA. Involved in the processing of primary rRNA transcript to yield the immediate precursors to the large and small rRNAs (23S and 16S). Processes some mRNAs, and tRNAs when they are encoded in the rRNA operon. Processes pre-crRNA and tracrRNA of type II CRISPR loci if present in the organism. The sequence is that of Ribonuclease 3 from Edwardsiella ictaluri (strain 93-146).